An 89-amino-acid chain; its full sequence is Small ribosomal subunit protein uS17 (89 aa).

Belongs to the universal ribosomal protein uS17 family. In terms of assembly, part of the 30S ribosomal subunit.

One of the primary rRNA binding proteins, it binds specifically to the 5'-end of 16S ribosomal RNA. The polypeptide is Small ribosomal subunit protein uS17 (Chlorobium phaeobacteroides (strain BS1)).